The following is a 161-amino-acid chain: NAD(P)H-quinone oxidoreductase subunit I, chloroplastic (161 aa).

4Fe-4S ferredoxin-type domains follow at residues Gly-55–Lys-84 and Leu-95–Glu-124. Cys-64, Cys-67, Cys-70, Cys-74, Cys-104, Cys-107, Cys-110, and Cys-114 together coordinate [4Fe-4S] cluster.

This sequence belongs to the complex I 23 kDa subunit family. In terms of assembly, NDH is composed of at least 16 different subunits, 5 of which are encoded in the nucleus. [4Fe-4S] cluster is required as a cofactor.

It is found in the plastid. The protein resides in the chloroplast thylakoid membrane. It carries out the reaction a plastoquinone + NADH + (n+1) H(+)(in) = a plastoquinol + NAD(+) + n H(+)(out). The catalysed reaction is a plastoquinone + NADPH + (n+1) H(+)(in) = a plastoquinol + NADP(+) + n H(+)(out). In terms of biological role, NDH shuttles electrons from NAD(P)H:plastoquinone, via FMN and iron-sulfur (Fe-S) centers, to quinones in the photosynthetic chain and possibly in a chloroplast respiratory chain. The immediate electron acceptor for the enzyme in this species is believed to be plastoquinone. Couples the redox reaction to proton translocation, and thus conserves the redox energy in a proton gradient. This chain is NAD(P)H-quinone oxidoreductase subunit I, chloroplastic, found in Phaseolus vulgaris (Kidney bean).